A 171-amino-acid chain; its full sequence is Adenine phosphoribosyltransferase (171 aa).

The protein belongs to the purine/pyrimidine phosphoribosyltransferase family. In terms of assembly, homodimer.

The protein localises to the cytoplasm. The enzyme catalyses AMP + diphosphate = 5-phospho-alpha-D-ribose 1-diphosphate + adenine. The protein operates within purine metabolism; AMP biosynthesis via salvage pathway; AMP from adenine: step 1/1. Catalyzes a salvage reaction resulting in the formation of AMP, that is energically less costly than de novo synthesis. The protein is Adenine phosphoribosyltransferase of Mesomycoplasma hyopneumoniae (strain 232) (Mycoplasma hyopneumoniae).